Here is an 85-residue protein sequence, read N- to C-terminus: MSEEYLQSDLARAIETHSIESVENLNKSETVFYICDVLGVEPPEAHPSEHNGTVPRSLSQEWAKILAEEAEENSEENNDESEEDN.

The interval 44–85 is disordered; sequence EAHPSEHNGTVPRSLSQEWAKILAEEAEENSEENNDESEEDN. Residues 50–60 show a composition bias toward polar residues; sequence HNGTVPRSLSQ. A compositionally biased stretch (acidic residues) spans 68 to 85; the sequence is EEAEENSEENNDESEEDN.

This is an uncharacterized protein from Haloarcula hispanica (His1V).